The primary structure comprises 254 residues: Homeobox protein BarH-like 1 (254 aa).

Residues 1–20 are disordered; it reads MQRPGEPGAARFGPPEGCAD. Positions 142–201 form a DNA-binding region, homeobox; that stretch reads GRRSRTVFTELQLMGLEKRFEKQKYLSTPDRIDLAESLGLSQLQVKTWYQNRRMKWKKIV. A disordered region spans residues 204 to 254; the sequence is GGGLESPTKPKGRPKKNSIPTSEQLTEQERAKDAEKPAEVPGEPSDRSRED. A compositionally biased stretch (basic and acidic residues) spans 230 to 254; it reads EQERAKDAEKPAEVPGEPSDRSRED.

This sequence belongs to the BAR homeobox family. In terms of tissue distribution, widely expressed. Expressed at higher levels in testis and heart. Detected in craniofacial tissue and adult iris, but not in lymphocytes, fibroblasts, choroid retina, retinal pigment epithelium, kidney, or fetal liver.

The protein resides in the nucleus. Functionally, transcription factor, which is involved in craniofacial development, in odontogenesis and in stomach organogenesis. May have a role in the differentiation of molars from incisors. Plays a role in suppressing endodermal Wnt activity. Binds to a regulatory module of the NCAM promoter. The chain is Homeobox protein BarH-like 1 (BARX1) from Homo sapiens (Human).